The primary structure comprises 203 residues: A-type ATP synthase subunit E (203 aa).

Belongs to the V-ATPase E subunit family. Might form a homodimer. Interacts with subunit H via residues 41-60. The A-type ATPase is composed of subunits A(3), B(3), C, D, E(1 or 2), F, H(2), I and K(x).

It is found in the cell membrane. Functionally, component of the A-type ATP synthase that produces ATP from ADP in the presence of a proton gradient across the membrane. The sequence is that of A-type ATP synthase subunit E from Methanocaldococcus jannaschii (strain ATCC 43067 / DSM 2661 / JAL-1 / JCM 10045 / NBRC 100440) (Methanococcus jannaschii).